We begin with the raw amino-acid sequence, 502 residues long: Ubiquitin-associated protein 1 (502 aa).

The tract at residues 1-95 (MASKKLGTDV…AEAKVNSKSG (95 aa)) is interaction with ESCRT-I. The region spanning 17–63 (LDDVPFKIGDKFKTPAKVGLPIGFSLPDCLQVVREMQYDFSLEKKTI) is the UMA domain. Residues 80–100 (ERKAEEAEAKVNSKSGPEGDS) are compositionally biased toward basic and acidic residues. Disordered regions lie at residues 80–117 (ERKA…PPPI) and 135–156 (VSSS…DFNP). 3 positions are modified to phosphoserine: Ser146, Ser205, and Ser289. The segment at 260-290 (VSNIKSLSFPKLDSDDSNQKTVKLASTFHST) is interaction with PTPN23. UBA domains follow at residues 389–430 (SPSE…LFAH) and 451–498 (QCSE…LMAR).

Component of an ESCRT-I complex (endosomal sorting complex required for transport I) which consists of TSG101, VPS28, VPS37A and UBAP1 in a 1:1:1:1 stoichiometry. Interacts with PTPN23. Interacts (via UBA domains) with ubiquitinated proteins. As to expression, ubiquitous. Highly expressed in heart, liver, brain, kidney, spleen, skeletal muscle, stomach, testis and lung.

It is found in the cytoplasm. Its subcellular location is the cytosol. The protein resides in the endosome. In terms of biological role, component of the ESCRT-I complex, a regulator of vesicular trafficking process. Binds to ubiquitinated cargo proteins and is required for the sorting of endocytic ubiquitinated cargos into multivesicular bodies (MVBs). Plays a role in the proteasomal degradation of ubiquitinated cell-surface proteins, such as EGFR and BST2. The chain is Ubiquitin-associated protein 1 from Mus musculus (Mouse).